The sequence spans 362 residues: Methionine import ATP-binding protein MetN (362 aa).

Positions 2 to 241 constitute an ABC transporter domain; the sequence is IHIENLSKTY…PRHEVTRAMV (240 aa). 38–45 is an ATP binding site; the sequence is GPSGAGKS.

The protein belongs to the ABC transporter superfamily. Methionine importer (TC 3.A.1.24) family. In terms of assembly, the complex is composed of two ATP-binding proteins (MetN), two transmembrane proteins (MetI) and a solute-binding protein (MetQ).

The protein localises to the cell inner membrane. It carries out the reaction L-methionine(out) + ATP + H2O = L-methionine(in) + ADP + phosphate + H(+). The catalysed reaction is D-methionine(out) + ATP + H2O = D-methionine(in) + ADP + phosphate + H(+). In terms of biological role, part of the ABC transporter complex MetNIQ involved in methionine import. Responsible for energy coupling to the transport system. In Bordetella bronchiseptica (strain ATCC BAA-588 / NCTC 13252 / RB50) (Alcaligenes bronchisepticus), this protein is Methionine import ATP-binding protein MetN.